Here is a 375-residue protein sequence, read N- to C-terminus: MSAVLDLTCELIARPSVTPDDAGCQTLLAARLKQAGFQCDHLRLGEVDNLWATHGQGAPVLVLLGHTDVVPPGPREAWASDPFTPQIREGVLYGRGTADMKGSVAAFVVAAEQFVAAHPDHTGTLAVLLTSDEEGDAIDGVRHVARLFAERGQRIDWCITGEPSSTATLGDLLRVGRRGSLSAKLRVQGVQGHVAYPEKARNPIHQAAPALAELSARRWDDGYESFPPTSLQISNIHAGTGANNVIPGELEVDFNIRYNPHWDAPKLEAEITALLDQHGLQYTLKWHRSGEPFYTPEGTLRATARAVLAEHIGRAPEESTGGGTSDARFIAPLGAQCIEVGPVNASIHQVDENVRVDELEALPGLYQRLVERLLV.

Histidine 66 contacts Zn(2+). Aspartate 68 is an active-site residue. A Zn(2+)-binding site is contributed by aspartate 99. The active-site Proton acceptor is glutamate 133. Zn(2+)-binding residues include glutamate 134, glutamate 162, and histidine 348.

It belongs to the peptidase M20A family. DapE subfamily. As to quaternary structure, homodimer. The cofactor is Zn(2+). It depends on Co(2+) as a cofactor.

The catalysed reaction is N-succinyl-(2S,6S)-2,6-diaminopimelate + H2O = (2S,6S)-2,6-diaminopimelate + succinate. It functions in the pathway amino-acid biosynthesis; L-lysine biosynthesis via DAP pathway; LL-2,6-diaminopimelate from (S)-tetrahydrodipicolinate (succinylase route): step 3/3. Catalyzes the hydrolysis of N-succinyl-L,L-diaminopimelic acid (SDAP), forming succinate and LL-2,6-diaminopimelate (DAP), an intermediate involved in the bacterial biosynthesis of lysine and meso-diaminopimelic acid, an essential component of bacterial cell walls. In Stenotrophomonas maltophilia (strain R551-3), this protein is Succinyl-diaminopimelate desuccinylase.